A 253-amino-acid polypeptide reads, in one-letter code: Glucosamine-6-phosphate deaminase (253 aa).

The active-site Proton acceptor; for enolization step is Asp67. Asn136 acts as the For ring-opening step in catalysis. The active-site Proton acceptor; for ring-opening step is His138. The active-site For ring-opening step is Glu143.

The protein belongs to the glucosamine/galactosamine-6-phosphate isomerase family. NagB subfamily.

The catalysed reaction is alpha-D-glucosamine 6-phosphate + H2O = beta-D-fructose 6-phosphate + NH4(+). It functions in the pathway amino-sugar metabolism; N-acetylneuraminate degradation; D-fructose 6-phosphate from N-acetylneuraminate: step 5/5. Its function is as follows. Catalyzes the reversible isomerization-deamination of glucosamine 6-phosphate (GlcN6P) to form fructose 6-phosphate (Fru6P) and ammonium ion. The protein is Glucosamine-6-phosphate deaminase of Thermoanaerobacter sp. (strain X514).